We begin with the raw amino-acid sequence, 131 residues long: Profilin-1 (131 aa).

Belongs to the profilin family. As to quaternary structure, occurs in many kinds of cells as a complex with monomeric actin in a 1:1 ratio. As to expression, expressed at low levels roots, leaves, stems, flowers and siliques. Expressed in leaf epidermal cells, trichomes and stem epidermal cells. Detected in phloem exudates (at protein level).

Its subcellular location is the cytoplasm. It localises to the cytoskeleton. Functionally, binds to actin monomers and regulates the organization of the actin cytoskeleton. At high concentrations, profilin prevents the polymerization of actin, whereas it enhances it at low concentrations. At low concentrations, associates with the poly-proline motif of formins to enhance actin filament elongation rate. Binds ACT1, ACT7 and ACT11 and inhibits actin polymerization. Coordinates the stochastic dynamic properties of actin filaments by modulating formin-mediated actin nucleation and assembly during axial cell expansion. Binds G-actin and poly-L-proline in vitro. Inhibits cell growth of various pathogenic fungal strains. May play a role as antifungal proteins in the defense system against fungal pathogen attacks. The chain is Profilin-1 from Arabidopsis thaliana (Mouse-ear cress).